The sequence spans 141 residues: Meiotically up-regulated gene 118 protein (141 aa).

The span at 106-115 (LSSQKSARQP) shows a compositional bias: polar residues. The tract at residues 106–141 (LSSQKSARQPTKTVASSSSSSSKSTTVSKSSSKSQV) is disordered. Residues 116-141 (TKTVASSSSSSSKSTTVSKSSSKSQV) are compositionally biased toward low complexity.

Its subcellular location is the nucleus. Functionally, has a role in meiosis. This is Meiotically up-regulated gene 118 protein (mug118) from Schizosaccharomyces pombe (strain 972 / ATCC 24843) (Fission yeast).